The primary structure comprises 706 residues: Histone deacetylase HDA1 (706 aa).

The segment covering 1–24 (MDSVMVKKEVLENPDHDLKRKLEE) has biased composition (basic and acidic residues). Residues 1–36 (MDSVMVKKEVLENPDHDLKRKLEENKEEENSLSTTS) are disordered. Residues 67–396 (RYHAKIFTSY…ALSVAKVLIG (330 aa)) are histone deacetylase. His206 is an active-site residue.

It belongs to the histone deacetylase family. HD type 2 subfamily.

The protein resides in the nucleus. It catalyses the reaction N(6)-acetyl-L-lysyl-[histone] + H2O = L-lysyl-[histone] + acetate. Its function is as follows. Responsible for the deacetylation of lysine residues on the N-terminal part of the core histones (H2A, H2B, H3 and H4). Histone deacetylation gives a tag for epigenetic repression and plays an important role in transcriptional regulation, cell cycle progression and developmental events. Histone deacetylases act via the formation of large multiprotein complexes. The chain is Histone deacetylase HDA1 (HDA1) from Saccharomyces cerevisiae (strain ATCC 204508 / S288c) (Baker's yeast).